The primary structure comprises 446 residues: Methylenetetrahydrofolate--tRNA-(uracil-5-)-methyltransferase TrmFO (446 aa).

9–14 (GGGMAG) lines the FAD pocket.

Belongs to the MnmG family. TrmFO subfamily. Requires FAD as cofactor.

Its subcellular location is the cytoplasm. It carries out the reaction uridine(54) in tRNA + (6R)-5,10-methylene-5,6,7,8-tetrahydrofolate + NADH + H(+) = 5-methyluridine(54) in tRNA + (6S)-5,6,7,8-tetrahydrofolate + NAD(+). The catalysed reaction is uridine(54) in tRNA + (6R)-5,10-methylene-5,6,7,8-tetrahydrofolate + NADPH + H(+) = 5-methyluridine(54) in tRNA + (6S)-5,6,7,8-tetrahydrofolate + NADP(+). Its function is as follows. Catalyzes the folate-dependent formation of 5-methyl-uridine at position 54 (M-5-U54) in all tRNAs. This chain is Methylenetetrahydrofolate--tRNA-(uracil-5-)-methyltransferase TrmFO, found in Ruegeria sp. (strain TM1040) (Silicibacter sp.).